The following is a 199-amino-acid chain: Guanylyl cyclase-activating protein 1 (199 aa).

A lipid anchor (N-myristoyl glycine) is attached at Gly2. The residue at position 3 (Asn3) is a Deamidated asparagine. EF-hand domains lie at 13–48 (SATECHQWYKKFMTECPSGQLTLYEFKQFFGLKNLS), 50–85 (SANKYVEQMFETFDFNKDGYIDFMEYVAALSLVLKG), 86–121 (KVDQKLRWYFKLYDVDGNGCIDRGELLNIIKAIRAI), and 129–164 (TAEEFTNMVFDKIDINGDGELSLEEFMEGVQKDEVL). Positions 63, 65, 67, 69, 74, 99, 101, 103, 105, 110, 142, 144, 146, 148, and 153 each coordinate Ca(2+).

As to expression, retina, in rod and cone outer segments, and pineal gland.

Stimulates retinal guanylyl cyclase when free calcium ions concentration is low and inhibits guanylyl cyclase when free calcium ions concentration is elevated. This Ca(2+)-sensitive regulation of retinal guanylyl cyclase is a key event in recovery of the dark state of rod photoreceptors following light exposure. This chain is Guanylyl cyclase-activating protein 1 (GUCA1A), found in Gallus gallus (Chicken).